The sequence spans 298 residues: N-acetylmuramic acid 6-phosphate etherase (298 aa).

The region spanning I55–K218 is the SIS domain. Catalysis depends on E83, which acts as the Proton donor. E114 is a catalytic residue.

This sequence belongs to the GCKR-like family. MurNAc-6-P etherase subfamily. In terms of assembly, homodimer.

It catalyses the reaction N-acetyl-D-muramate 6-phosphate + H2O = N-acetyl-D-glucosamine 6-phosphate + (R)-lactate. It functions in the pathway amino-sugar metabolism; 1,6-anhydro-N-acetylmuramate degradation. Its pathway is amino-sugar metabolism; N-acetylmuramate degradation. The protein operates within cell wall biogenesis; peptidoglycan recycling. Specifically catalyzes the cleavage of the D-lactyl ether substituent of MurNAc 6-phosphate, producing GlcNAc 6-phosphate and D-lactate. Together with AnmK, is also required for the utilization of anhydro-N-acetylmuramic acid (anhMurNAc) either imported from the medium or derived from its own cell wall murein, and thus plays a role in cell wall recycling. This Shigella sonnei (strain Ss046) protein is N-acetylmuramic acid 6-phosphate etherase.